A 70-amino-acid chain; its full sequence is Large ribosomal subunit protein bL31 (70 aa).

Residues Cys-16, Cys-18, Cys-37, and Cys-40 each coordinate Zn(2+).

This sequence belongs to the bacterial ribosomal protein bL31 family. Type A subfamily. Part of the 50S ribosomal subunit. Requires Zn(2+) as cofactor.

Functionally, binds the 23S rRNA. In Alteromonas mediterranea (strain DSM 17117 / CIP 110805 / LMG 28347 / Deep ecotype), this protein is Large ribosomal subunit protein bL31.